A 207-amino-acid chain; its full sequence is MKTKILSLANEEVGEISLNEDIFAVEFIRDDVIKQVIDWQRAKAMSGNHKTKTVSEVSGTTKKPFKQKGTGNARQGSLRSVQMRGGGVAHGPRVRSHVTKLPKKVRKLGLIHALSEKFAEGRLLVIDSLKLDQPKTSALVNILSKFQGKSFFVIDGNEVDTNFSLAAKNIYNTAIVPQIGANVYDIIRYEYVLLSQEAVSVLEERLR.

Residues 50–75 are disordered; it reads KTKTVSEVSGTTKKPFKQKGTGNARQ.

Belongs to the universal ribosomal protein uL4 family. In terms of assembly, part of the 50S ribosomal subunit.

Its function is as follows. One of the primary rRNA binding proteins, this protein initially binds near the 5'-end of the 23S rRNA. It is important during the early stages of 50S assembly. It makes multiple contacts with different domains of the 23S rRNA in the assembled 50S subunit and ribosome. Functionally, forms part of the polypeptide exit tunnel. The chain is Large ribosomal subunit protein uL4 from Rickettsia akari (strain Hartford).